The sequence spans 576 residues: Lysine--tRNA ligase (576 aa).

Mg(2+)-binding residues include glutamate 412 and glutamate 419.

It belongs to the class-II aminoacyl-tRNA synthetase family. Homodimer. Mg(2+) serves as cofactor.

Its subcellular location is the cytoplasm. The enzyme catalyses tRNA(Lys) + L-lysine + ATP = L-lysyl-tRNA(Lys) + AMP + diphosphate. The chain is Lysine--tRNA ligase from Parabacteroides distasonis (strain ATCC 8503 / DSM 20701 / CIP 104284 / JCM 5825 / NCTC 11152).